Here is a 527-residue protein sequence, read N- to C-terminus: Phosphoenolpyruvate carboxykinase (ATP) (527 aa).

Positions 56, 191, and 197 each coordinate substrate. ATP contacts are provided by residues lysine 197, histidine 216, and 232–240 (GLSGTGKTT). Residues lysine 197 and histidine 216 each coordinate Mn(2+). Aspartate 253 contacts Mn(2+). ATP-binding positions include glutamate 281, arginine 318, 437-438 (RI), and threonine 443. Arginine 318 is a binding site for substrate.

It belongs to the phosphoenolpyruvate carboxykinase (ATP) family. The cofactor is Mn(2+).

Its subcellular location is the cytoplasm. The catalysed reaction is oxaloacetate + ATP = phosphoenolpyruvate + ADP + CO2. It functions in the pathway carbohydrate biosynthesis; gluconeogenesis. Functionally, involved in the gluconeogenesis. Catalyzes the conversion of oxaloacetate (OAA) to phosphoenolpyruvate (PEP) through direct phosphoryl transfer between the nucleoside triphosphate and OAA. The chain is Phosphoenolpyruvate carboxykinase (ATP) from Shouchella clausii (strain KSM-K16) (Alkalihalobacillus clausii).